Here is a 131-residue protein sequence, read N- to C-terminus: Profilin-1 (131 aa).

The protein belongs to the profilin family. In terms of assembly, occurs in many kinds of cells as a complex with monomeric actin in a 1:1 ratio.

It is found in the cytoplasm. It localises to the cytoskeleton. Its function is as follows. Binds to actin and affects the structure of the cytoskeleton. At high concentrations, profilin prevents the polymerization of actin, whereas it enhances it at low concentrations. By binding to PIP2, it inhibits the formation of IP3 and DG. The protein is Profilin-1 of Malus domestica (Apple).